The chain runs to 110 residues: Large ribosomal subunit protein uL22 (110 aa).

Belongs to the universal ribosomal protein uL22 family. In terms of assembly, part of the 50S ribosomal subunit.

Functionally, this protein binds specifically to 23S rRNA; its binding is stimulated by other ribosomal proteins, e.g. L4, L17, and L20. It is important during the early stages of 50S assembly. It makes multiple contacts with different domains of the 23S rRNA in the assembled 50S subunit and ribosome. Its function is as follows. The globular domain of the protein is located near the polypeptide exit tunnel on the outside of the subunit, while an extended beta-hairpin is found that lines the wall of the exit tunnel in the center of the 70S ribosome. This is Large ribosomal subunit protein uL22 from Aggregatibacter actinomycetemcomitans (Actinobacillus actinomycetemcomitans).